Consider the following 690-residue polypeptide: Glycine--tRNA ligase beta subunit (690 aa).

This sequence belongs to the class-II aminoacyl-tRNA synthetase family. Tetramer of two alpha and two beta subunits.

It is found in the cytoplasm. It carries out the reaction tRNA(Gly) + glycine + ATP = glycyl-tRNA(Gly) + AMP + diphosphate. In Lactobacillus gasseri (strain ATCC 33323 / DSM 20243 / BCRC 14619 / CIP 102991 / JCM 1131 / KCTC 3163 / NCIMB 11718 / NCTC 13722 / AM63), this protein is Glycine--tRNA ligase beta subunit.